We begin with the raw amino-acid sequence, 73 residues long: Signaling peptide TAXIMIN 2 (73 aa).

Residues 1–27 (MGDCRPLGFLIGLPFALVALVLALVGA) form the signal peptide.

As to expression, confined to the vasculature of various organs, including seedling roots, leaves, cotyledons, sepals and petals. Also accumulates in root hair cells.

It localises to the secreted. In terms of biological role, signaling peptide involved in the regulation of lateral organs separation. The chain is Signaling peptide TAXIMIN 2 from Arabidopsis thaliana (Mouse-ear cress).